A 39-amino-acid polypeptide reads, in one-letter code: Cytochrome b6-f complex subunit 5 (39 aa).

The chain crosses the membrane as a helical span at residues 5 to 25 (LLCGIVLGLVPVTLLGLFVSA).

Belongs to the PetG family. As to quaternary structure, the 4 large subunits of the cytochrome b6-f complex are cytochrome b6, subunit IV (17 kDa polypeptide, PetD), cytochrome f and the Rieske protein, while the 4 small subunits are PetG, PetL, PetM and PetN. The complex functions as a dimer.

It is found in the cellular thylakoid membrane. In terms of biological role, component of the cytochrome b6-f complex, which mediates electron transfer between photosystem II (PSII) and photosystem I (PSI), cyclic electron flow around PSI, and state transitions. PetG is required for either the stability or assembly of the cytochrome b6-f complex. The sequence is that of Cytochrome b6-f complex subunit 5 from Prochlorococcus marinus (strain NATL1A).